A 283-amino-acid chain; its full sequence is Formamidopyrimidine-DNA glycosylase (283 aa).

Proline 2 functions as the Schiff-base intermediate with DNA in the catalytic mechanism. The Proton donor role is filled by glutamate 3. Lysine 60 (proton donor; for beta-elimination activity) is an active-site residue. Positions 100, 119, and 164 each coordinate DNA. An FPG-type zinc finger spans residues 249-283; sequence WVYNRAGEPCKVCGDVIQRIKLGGRSSHFCRQCQV. Catalysis depends on arginine 273, which acts as the Proton donor; for delta-elimination activity.

Belongs to the FPG family. In terms of assembly, monomer. Zn(2+) is required as a cofactor.

The enzyme catalyses Hydrolysis of DNA containing ring-opened 7-methylguanine residues, releasing 2,6-diamino-4-hydroxy-5-(N-methyl)formamidopyrimidine.. The catalysed reaction is 2'-deoxyribonucleotide-(2'-deoxyribose 5'-phosphate)-2'-deoxyribonucleotide-DNA = a 3'-end 2'-deoxyribonucleotide-(2,3-dehydro-2,3-deoxyribose 5'-phosphate)-DNA + a 5'-end 5'-phospho-2'-deoxyribonucleoside-DNA + H(+). In terms of biological role, involved in base excision repair of DNA damaged by oxidation or by mutagenic agents. Acts as a DNA glycosylase that recognizes and removes damaged bases. Has a preference for oxidized purines, such as 7,8-dihydro-8-oxoguanine (8-oxoG). Has AP (apurinic/apyrimidinic) lyase activity and introduces nicks in the DNA strand. Cleaves the DNA backbone by beta-delta elimination to generate a single-strand break at the site of the removed base with both 3'- and 5'-phosphates. The protein is Formamidopyrimidine-DNA glycosylase of Nostoc sp. (strain PCC 7120 / SAG 25.82 / UTEX 2576).